The primary structure comprises 832 residues: MRVRGMQRNWQHLGKWGLLFLGILIICNAADNLWVTVYYGVPVWKEATTTLFCASDAKAYEREAHNVWATHACVPTDPNPQEVFLKNVTENFDMWKNNMVEQMHTDIISLWDQSLKPCVKLTPLCVTLNCTNATNNSQEKPGAMQNCSFNMTTEVRDKKLKLSALFYRLDIVPIGNNNSSEYRLINCNTSTITQACPKVSWDPIPIHYCAPAGYAILKCNDKRFNGTGPCKNVSTVQCTHGIKPVVSTQLLLNGSLAEEGIVIRSQNISNNAKTIIVHLNESVQINCTRPNNNTRKGIHLGPGQTFYATGAIIGDIRKAHCNISGTQWNNTLEYVKAELKSHFPNNTAIKFNQSSGGDLEITMHSFNCRGEFFYCDTSGLFNDTGSNNGTITLPCRIKQIVNMWQGVGRAMYTSPIAGNITCNSNITGLLLTRDGGNESNIETFRPEGGNMKDNWRSELYKYKVVEIEPLGVAPTKAKRQVVQREKRAAGLGALFLGFLGDSREHMGAASITLTVQARQLLSGIVQQQNNLLRAIEAQQHLLQLTVWGIKQLQARVLAVERYLKDQQLLGIWGCSGKLICTTNVPWNSSWSNKSQEEIWNNMTWMEWEKEISNYSNIIYKLIEESQNQQEKNEQELLALDKWASLWNWFDISNWLWYIKIFIMIVGGLIGLRIVFAVLSIVNRVRKGYSPLSLQTLIPSPRGPDRPEGIEEGGGEQGKDRSVRLVTGFLALAWDDLRNLCLFSYRHLRDFILIAARIVDRGLRRGWEALKYLGNLTRYWSQELKNSAISLFNTTAIVVAEGTDRIIEVLQRAGRAVLNIPRRIRQGAERALL.

The N-terminal stretch at 1–31 is a signal peptide; the sequence is MRVRGMQRNWQHLGKWGLLFLGILIICNAAD. Topologically, residues 32–660 are extracellular; the sequence is NLWVTVYYGV…ISNWLWYIKI (629 aa). Cysteines 53 and 73 form a disulfide. 20 N-linked (GlcNAc...) asparagine; by host glycosylation sites follow: asparagine 87, asparagine 129, asparagine 132, asparagine 135, asparagine 146, asparagine 150, asparagine 177, asparagine 178, asparagine 188, asparagine 225, asparagine 232, asparagine 253, asparagine 267, asparagine 280, asparagine 286, asparagine 292, asparagine 322, asparagine 329, asparagine 345, and asparagine 352. 5 cysteine pairs are disulfide-bonded: cysteine 118–cysteine 196, cysteine 125–cysteine 187, cysteine 130–cysteine 147, cysteine 209–cysteine 238, and cysteine 219–cysteine 230. Positions 130-146 are V1; it reads CTNATNNSQEKPGAMQN. Residues 147–187 form a V2 region; that stretch reads CSFNMTTEVRDKKLKLSALFYRLDIVPIGNNNSSEYRLINC. The V3 stretch occupies residues 287–320; it reads CTRPNNNTRKGIHLGPGQTFYATGAIIGDIRKAH. Cysteines 287 and 321 form a disulfide. The CD4-binding loop stretch occupies residues 354–364; the sequence is SSGGDLEITMH. 2 cysteine pairs are disulfide-bonded: cysteine 368–cysteine 422 and cysteine 375–cysteine 395. A V4 region spans residues 375–395; that stretch reads CDTSGLFNDTGSNNGTITLPC. 5 N-linked (GlcNAc...) asparagine; by host glycosylation sites follow: asparagine 382, asparagine 388, asparagine 419, asparagine 425, and asparagine 437. Residues 438-447 are V5; the sequence is ESNIETFRPE. A fusion peptide region spans residues 488–508; it reads AAGLGALFLGFLGDSREHMGA. The tract at residues 550–568 is immunosuppression; the sequence is KQLQARVLAVERYLKDQQL. A disulfide bond links cysteine 574 and cysteine 580. Residues asparagine 587, asparagine 592, asparagine 601, and asparagine 613 are each glycosylated (N-linked (GlcNAc...) asparagine; by host). A coiled-coil region spans residues 609–643; the sequence is KEISNYSNIIYKLIEESQNQQEKNEQELLALDKWA. The segment at 638 to 659 is MPER; binding to GalCer; sequence ALDKWASLWNWFDISNWLWYIK. The helical transmembrane segment at 661–681 threads the bilayer; sequence FIMIVGGLIGLRIVFAVLSIV. Over 682-832 the chain is Cytoplasmic; the sequence is NRVRKGYSPL…IRQGAERALL (151 aa). The YXXL motif; contains endocytosis signal motif lies at 688 to 691; it reads YSPL. The disordered stretch occupies residues 695 to 717; the sequence is TLIPSPRGPDRPEGIEEGGGEQG. Cysteine 740 is lipidated: S-palmitoyl cysteine; by host. The Di-leucine internalization motif signature appears at 831 to 832; that stretch reads LL.

It belongs to the HIV-1 env protein family. In terms of assembly, the mature envelope protein (Env) consists of a homotrimer of non-covalently associated gp120-gp41 heterodimers. The resulting complex protrudes from the virus surface as a spike. There seems to be as few as 10 spikes on the average virion. Interacts with host CD4, CCR5 and CXCR4. Gp120 also interacts with the C-type lectins CD209/DC-SIGN and CLEC4M/DC-SIGNR (collectively referred to as DC-SIGN(R)). Gp120 and gp41 interact with GalCer. Gp120 interacts with host ITGA4/ITGB7 complex; on CD4+ T-cells, this interaction results in rapid activation of integrin ITGAL/LFA-1, which facilitates efficient cell-to-cell spreading of HIV-1. Gp120 interacts with cell-associated heparan sulfate; this interaction increases virus infectivity on permissive cells and may be involved in infection of CD4- cells. The mature envelope protein (Env) consists of a homotrimer of non-covalently associated gp120-gp41 heterodimers. The resulting complex protrudes from the virus surface as a spike. There seems to be as few as 10 spikes on the average virion. Post-translationally, highly glycosylated by host. The high number of glycan on the protein is reffered to as 'glycan shield' because it contributes to hide protein sequence from adaptive immune system. In terms of processing, palmitoylation of the transmembrane protein and of Env polyprotein (prior to its proteolytic cleavage) is essential for their association with host cell membrane lipid rafts. Palmitoylation is therefore required for envelope trafficking to classical lipid rafts, but not for viral replication. Specific enzymatic cleavages in vivo yield mature proteins. Envelope glycoproteins are synthesized as an inactive precursor that is heavily N-glycosylated and processed likely by host cell furin in the Golgi to yield the mature SU and TM proteins. The cleavage site between SU and TM requires the minimal sequence [KR]-X-[KR]-R. About 2 of the 9 disulfide bonds of gp41 are reduced by P4HB/PDI, following binding to CD4 receptor.

Its subcellular location is the virion membrane. The protein resides in the host cell membrane. It is found in the host endosome membrane. Its function is as follows. Oligomerizes in the host endoplasmic reticulum into predominantly trimers. In a second time, gp160 transits in the host Golgi, where glycosylation is completed. The precursor is then proteolytically cleaved in the trans-Golgi and thereby activated by cellular furin or furin-like proteases to produce gp120 and gp41. In terms of biological role, attaches the virus to the host lymphoid cell by binding to the primary receptor CD4. This interaction induces a structural rearrangement creating a high affinity binding site for a chemokine coreceptor like CXCR4 and/or CCR5. Acts as a ligand for CD209/DC-SIGN and CLEC4M/DC-SIGNR, which are respectively found on dendritic cells (DCs), and on endothelial cells of liver sinusoids and lymph node sinuses. These interactions allow capture of viral particles at mucosal surfaces by these cells and subsequent transmission to permissive cells. HIV subverts the migration properties of dendritic cells to gain access to CD4+ T-cells in lymph nodes. Virus transmission to permissive T-cells occurs either in trans (without DCs infection, through viral capture and transmission), or in cis (following DCs productive infection, through the usual CD4-gp120 interaction), thereby inducing a robust infection. In trans infection, bound virions remain infectious over days and it is proposed that they are not degraded, but protected in non-lysosomal acidic organelles within the DCs close to the cell membrane thus contributing to the viral infectious potential during DCs' migration from the periphery to the lymphoid tissues. On arrival at lymphoid tissues, intact virions recycle back to DCs' cell surface allowing virus transmission to CD4+ T-cells. Functionally, acts as a class I viral fusion protein. Under the current model, the protein has at least 3 conformational states: pre-fusion native state, pre-hairpin intermediate state, and post-fusion hairpin state. During fusion of viral and target intracellular membranes, the coiled coil regions (heptad repeats) assume a trimer-of-hairpins structure, positioning the fusion peptide in close proximity to the C-terminal region of the ectodomain. The formation of this structure appears to drive apposition and subsequent fusion of viral and target cell membranes. Complete fusion occurs in host cell endosomes and is dynamin-dependent, however some lipid transfer might occur at the plasma membrane. The virus undergoes clathrin-dependent internalization long before endosomal fusion, thus minimizing the surface exposure of conserved viral epitopes during fusion and reducing the efficacy of inhibitors targeting these epitopes. Membranes fusion leads to delivery of the nucleocapsid into the cytoplasm. This Human immunodeficiency virus type 1 group M subtype F1 (isolate VI850) (HIV-1) protein is Envelope glycoprotein gp160.